We begin with the raw amino-acid sequence, 92 residues long: MAPGERKKSSRKKKDPDAPKRSLSAYMFFANENRDIVRAENPGISFGQVGKLLGEKWKALNSEDKLPYENKAEADKKRYEKEKAEYAKKNSA.

2 disordered regions span residues 1–22 (MAPG…PKRS) and 64–92 (DKLP…KNSA). The HMG box DNA-binding region spans 19 to 87 (PKRSLSAYMF…RYEKEKAEYA (69 aa)).

It belongs to the NHP6 family. As to quaternary structure, weakly associates with the stable SPT16-POB3 heterodimer to form the FACT complex.

The protein localises to the nucleus. It is found in the chromosome. Functionally, DNA-binding protein that induces severe bending of DNA. Required for DNA-binding by the FACT complex, a general chromatin factor that acts to reorganize nucleosomes. The FACT complex is involved in multiple processes that require DNA as a template such as mRNA elongation, DNA replication and DNA repair. Also augments the fidelity of transcription by RNA polymerase III independently of any role in the FACT complex. The protein is Non-histone chromosomal protein 6 (NHP6) of Candida albicans (strain SC5314 / ATCC MYA-2876) (Yeast).